The primary structure comprises 219 residues: MKLFEIENAVDCRIIGRVNRFVVDVEVDGRRERAYINNTGRLKELIFEGNVGKCLTKRGGKLSYRLFAVSCEGGYALIDTQLQMRAFEVAIPKISWLDGEVRRNVKVGNSIIDYRIGESYVELKSAALKKGIYAMYPDCPTARGRKHLRLLEEIGKRSRALVVFVAALPSVRAFMPNREGDEELYRLIKRSKNVEFRSIQVEYLNGKVFLRNPDLKVVI.

The protein belongs to the SfsA family.

The sequence is that of Sugar fermentation stimulation protein homolog from Archaeoglobus fulgidus (strain ATCC 49558 / DSM 4304 / JCM 9628 / NBRC 100126 / VC-16).